Reading from the N-terminus, the 198-residue chain is Recombination protein RecR (198 aa).

The C4-type zinc finger occupies 56 to 71 (CGVCGNVDTSNPCGIC). The 96-residue stretch at 79-174 (RSICVVEEVA…RVTQLAHGLP (96 aa)) folds into the Toprim domain.

Belongs to the RecR family.

Functionally, may play a role in DNA repair. It seems to be involved in an RecBC-independent recombinational process of DNA repair. It may act with RecF and RecO. In Novosphingobium aromaticivorans (strain ATCC 700278 / DSM 12444 / CCUG 56034 / CIP 105152 / NBRC 16084 / F199), this protein is Recombination protein RecR.